An 89-amino-acid chain; its full sequence is Small ribosomal subunit protein uS15 (89 aa).

This sequence belongs to the universal ribosomal protein uS15 family. In terms of assembly, part of the 30S ribosomal subunit. Forms a bridge to the 50S subunit in the 70S ribosome, contacting the 23S rRNA.

Its function is as follows. One of the primary rRNA binding proteins, it binds directly to 16S rRNA where it helps nucleate assembly of the platform of the 30S subunit by binding and bridging several RNA helices of the 16S rRNA. Forms an intersubunit bridge (bridge B4) with the 23S rRNA of the 50S subunit in the ribosome. The sequence is that of Small ribosomal subunit protein uS15 from Shewanella baltica (strain OS185).